Reading from the N-terminus, the 168-residue chain is Vitelline membrane protein Vm26Ab (168 aa).

The N-terminal stretch at 1 to 23 (MAFNFGHLLIAGLVALSAVSSET) is a signal peptide. Residues 24-42 (IQLQPTQGILIPAPLAENI) constitute a propeptide, removed between stage 11 and 14 of oogenesis. Positions 43 to 46 (RVSR) are essential for N-terminal propeptide removal. Potential serine protease cleavage site. An 8 X 8 AA approximate repeats of P-[AS]-Y-S-A-P-A-[AS] region spans residues 52–119 (YGAAPAAPSY…PAYSAPASIP (68 aa)). One copy of the 1; half-length repeat lies at 55–58 (APAA). Residues 59-66 (PSYSAPAA) form repeat 2. The 3; approximate repeat unit spans residues 70-77 (QAYSAPAA). Tandem repeats lie at residues 78–85 (PAYSAPAA), 86–93 (PAYSAPAA), 94–101 (PAYSAPAA), 102–109 (PAYSAPAA), and 110–117 (PAYSAPAS). One can recognise a VM domain in the interval 117 to 154 (SIPSPPCPKNYLFSCQPSLQPVPCSAPAQSYGSAGAYS). The propeptide at 155–168 (QYVPQYAVPFVREL) is removed between stage 9 and 12 of oogenesis.

It belongs to the vitelline membrane protein family. Interacts with vml and Vm26Aa; forms part of a disulfide-linked network within the vitelline membrane of stage 10 egg chambers. Post-translationally, proteolytically processed after secretion into the perivitelline space. Undergoes several proteolytic processing steps during formation of the vitelline membrane; an initial processing step removing a C-terminal propeptide occurs between stage 9 and 12 of oogenesis while a second removing a N-terminal propeptide occurs between stage 11 and 14. Becomes part of a disulfide-linked network including other vitelline membrane proteins, including vml and Vm26Aa, during vitelline membrane biogenesis and maturation. Cys-123, Cys-131 and Cys-140 are involved in disulfide network formation, with Cys-131 being the most important. Undergoes both disulfide and non-disulfide cross-linking upon incorporation into the vitelline membrane. As to expression, follicle cells.

It localises to the secreted. Its subcellular location is the extracellular space. It is found in the extracellular matrix. Functionally, major early eggshell protein secreted by follicle cells into the perivitelline space and incorporated into the vitelline membrane. Involved in vitelline membrane biogenesis; forms a cross-linked network with other vitelline membrane components. The protein is Vitelline membrane protein Vm26Ab of Drosophila melanogaster (Fruit fly).